The following is a 67-amino-acid chain: uncharacterized protein (67 aa).

This is an uncharacterized protein from Lymantria dispar multicapsid nuclear polyhedrosis virus (LdMNPV).